A 450-amino-acid chain; its full sequence is Beclin-1 (450 aa).

Residue Met-1 is modified to N-acetylmethionine. Phosphoserine occurs at positions 15 and 30. The interval 48-72 is disordered; the sequence is TTAQAKPGETQEEETNSGEEPFIET. A phosphoserine; by AMPK mark is found at Ser-90, Ser-93, and Ser-96. Positions 108 to 127 match the BH3 motif; sequence TMENLSRRLKVTGDLFDIMS. Residues 112–159 form an interaction with BCL2 and BCL2L1 region; sequence LSRRLKVTGDLFDIMSGQTDVDHPLCEECTDTLLDQLDTQLNVTENEC. Position 119 is a phosphothreonine; by DAPK1 (Thr-119). A coiled-coil region spans residues 142 to 269; the sequence is DTLLDQLDTQ…QLDKLKKTNV (128 aa). The evolutionary conserved domain (ECD) stretch occupies residues 245–450; that stretch reads DELKSVENQM…AWVSSQFYNK (206 aa). Residues Lys-402 and Lys-437 each participate in a glycyl lysine isopeptide (Lys-Gly) (interchain with G-Cter in ubiquitin) cross-link. Positions 425–450 are required for membrane-association; sequence WTKALKFMLTNLKWGLAWVSSQFYNK.

This sequence belongs to the beclin family. A homodimeric form is proposed to exist; this metastable form readily transits to ATG14- or UVRAG-containing complexes with BECN1:UVRAG being more stable than BECN1:ATG14. Component of the PI3K (PI3KC3/PI3K-III/class III phosphatidylinositol 3-kinase) complex the core of which is composed of the catalytic subunit PIK3C3, the regulatory subunit PIK3R4 and BECN1 associating with additional regulatory/auxiliary subunits to form alternative complex forms. Alternative complex forms containing a fourth regulatory subunit in a mutually exclusive manner are PI3K complex I (PI3KC3-C1) containing ATG14, and PI3K complex II (PI3KC3-C2) containing UVRAG. PI3KC3-C1 displays a V-shaped architecture with PIK3R4 serving as a bridge between PIK3C3 and the ATG14:BECN1 subcomplex. Both, PI3KC3-C1 and PI3KC3-C2, can associate with further regulatory subunits, such as RUBCN, SH3GLB1/Bif-1 and AMBRA1. PI3KC3-C1 probably associates with PIK3CB. Forms a complex with PPP2CA and AMBRA1; AMBRA1 and BECN1 components of the complex regulate MYC stability via different pathways. Component of the complex, at least composed of LRPPRC, BECN1 and BCL2; the interactions prevent BECN1 from forming an autophagy-inducing complex with PIK3C3. Interacts with AMBRA1, GOPC, GRID2. Interacts with BCL2 and BCL2L1 isoform Bcl-X(L); the interaction inhibits BECN1 function in promoting autophagy by interfering with the formation of the PI3K complex. Interacts with cytosolic HMGB1; inhibits the interaction of BECN1 and BCL2 leading to promotion of autophagy. Interacts with USP10, USP13, VMP1, DAPK1, RAB39A. Interacts with the poly-Gln domain of ATXN3; the interaction causes deubiquitination at Lys-402 and stabilizes BECN1. Interacts with SLAMF1. Interacts with TRIM5; the interaction causes activation of BECN1 by causing its dissociation from its inhibitors BCL2 and TAB2. Interacts with active ULK1 (phosphorylated on 'Ser-317') and MEFV simultaneously. Interacts with WDR81 and WDR91; negatively regulates the PI3 kinase/PI3K activity associated with endosomal membranes. Interacts with LAPTM4B; competes with EGFR for LAPTM4B binding; regulates EGFR activity. Interacts with TRIM50. Interacts with TRIM16. Interacts with ATG14; this interaction is increased in the absence of TMEM39A. Interacts with WASHC1; preventing interaction with AMBRA1 and the DCX(AMBRA1) complex and subsequent ubiquitination. Interacts with TRIM17. Interacts with BCL2L10/BCL-B (via BH1 domain). Interacts with SH3BGRL. Interacts with IRGM; enhancing BECN1-interacting partners and influencing the composition of the BECN1 complex. Interacts with ARMC3. Interacts with LRPPRC. In terms of processing, phosphorylation at Thr-119 by DAPK1 reduces its interaction with BCL2 and BCL2L1 and promotes induction of autophagy. In response to autophagic stimuli, phosphorylated at serine residues by AMPK in an ATG14-dependent manner, and this phosphorylation is critical for maximally efficient autophagy. Polyubiquitinated by NEDD4, both with 'Lys-11'- and 'Lys-63'-linkages. 'Lys-11'-linked polyubiquitination leads to degradation and is enhanced when the stabilizing interaction partner VPS34 is depleted. Deubiquitinated by USP10 and USP13, leading to stabilize the PIK3C3/VPS34-containing complexes. Polyubiquitinated at Lys-402 with 'Lys-48'-linkages. 'Lys-48'-linked polyubiquitination of Lys-402 leads to degradation. Deubiquitinated by ATXN3, leading to stabilization. Ubiquitinated at Lys-437 via 'Lys-63'-linkage by the DCX(AMBRA1) complex, thereby increasing the association between BECN1 and PIK3C3 to promote PIK3C3 activity. 'Lys-48'-linked ubiquitination by RNF216 leads to proteasomal degradation and autophagy inhibition. Post-translationally, proteolytically processed by caspases including CASP8 and CASP3; the C-terminal fragments lack autophagy-inducing capacity and are proposed to induce apoptosis. Thus the cleavage is proposed to be an determinant to switch from autophagy to apoptosis pathways affecting cellular homeostasis including viral infections and survival of tumor cells.

Its subcellular location is the cytoplasm. It is found in the golgi apparatus. The protein resides in the trans-Golgi network membrane. The protein localises to the endosome membrane. It localises to the endoplasmic reticulum membrane. Its subcellular location is the mitochondrion membrane. It is found in the cytoplasmic vesicle. The protein resides in the autophagosome. The protein localises to the mitochondrion. It localises to the nucleus. Its function is as follows. Plays a central role in autophagy. Acts as a core subunit of the PI3K complex that mediates formation of phosphatidylinositol 3-phosphate; different complex forms are believed to play a role in multiple membrane trafficking pathways: PI3KC3-C1 is involved in initiation of autophagosomes and PI3KC3-C2 in maturation of autophagosomes and endocytosis. Involved in regulation of degradative endocytic trafficking and required for the abscission step in cytokinesis, probably in the context of PI3KC3-C2. Essential for the formation of PI3KC3-C2 but not PI3KC3-C1 PI3K complex forms. Involved in endocytosis. May play a role in antiviral host defense. Beclin-1-C 35 kDa localized to mitochondria can promote apoptosis; it induces the mitochondrial translocation of BAX and the release of proapoptotic factors. This is Beclin-1 (BECN1) from Pongo abelii (Sumatran orangutan).